A 124-amino-acid polypeptide reads, in one-letter code: Large ribosomal subunit protein bL12 (124 aa).

This sequence belongs to the bacterial ribosomal protein bL12 family. Homodimer. Part of the ribosomal stalk of the 50S ribosomal subunit. Forms a multimeric L10(L12)X complex, where L10 forms an elongated spine to which 2 to 4 L12 dimers bind in a sequential fashion. Binds GTP-bound translation factors.

Its function is as follows. Forms part of the ribosomal stalk which helps the ribosome interact with GTP-bound translation factors. Is thus essential for accurate translation. The polypeptide is Large ribosomal subunit protein bL12 (Mycoplasma mobile (strain ATCC 43663 / 163K / NCTC 11711) (Mesomycoplasma mobile)).